Here is a 505-residue protein sequence, read N- to C-terminus: MSQIIGHISQVIGPVVDVYFEGTESDLILPSIHDALEIKRHNGKKLIVEVQQHIGENTVRTVAMDSTDGLQRGMKVFPTGGPITMPVGEQIKGRLMNVVGDSIDGMKELNRDGAYSIHRDPPKFEDLTTVQEVLFTGIKVIDLLEPYSKGGKIGLFGGAGVGKTVLIMELINNIAKKHNGFSVFAGVGERTREGNDLLREMIESGVIRYGEAFKESMEKGHWDLSKVDYNEVEKSQATLVFGQMNEPPGARASVALSGLTVAESFRDMGAKSGARDILFFIDNIFRFTQAGSEVSALLGRMPSAVGYQPTLATEMGAMQERITSTKTGSITSVQAVYVPADDLTDPAPATTFTHLDATTVLSRKITELGIYPAVDPLESTSRILDPHIVGQEHYDVAQRVKQILQRNKELQDIISILGMEELSDADRLVVNRARRVQRFLSQPFTVAEQFTGVPGAMVAIEDTIKGFKMILDGEVDYLPEPAFLNVGTIEEAIEKGKKLLEQANK.

157 to 164 (GGAGVGKT) is an ATP binding site.

Belongs to the ATPase alpha/beta chains family. In terms of assembly, F-type ATPases have 2 components, CF(1) - the catalytic core - and CF(0) - the membrane proton channel. CF(1) has five subunits: alpha(3), beta(3), gamma(1), delta(1), epsilon(1). CF(0) has three main subunits: a(1), b(2) and c(9-12). The alpha and beta chains form an alternating ring which encloses part of the gamma chain. CF(1) is attached to CF(0) by a central stalk formed by the gamma and epsilon chains, while a peripheral stalk is formed by the delta and b chains.

Its subcellular location is the cell inner membrane. The enzyme catalyses ATP + H2O + 4 H(+)(in) = ADP + phosphate + 5 H(+)(out). Functionally, produces ATP from ADP in the presence of a proton gradient across the membrane. The catalytic sites are hosted primarily by the beta subunits. The polypeptide is ATP synthase subunit beta (Bacteroides fragilis (strain ATCC 25285 / DSM 2151 / CCUG 4856 / JCM 11019 / LMG 10263 / NCTC 9343 / Onslow / VPI 2553 / EN-2)).